The following is a 382-amino-acid chain: Heme A synthase (382 aa).

The next 8 helical transmembrane spans lie at 25–45 (GAVRAWLYLLAVLVVAMVAVG), 112–132 (LLGRIVGLVFFLPFAWFWARG), 141–161 (GLLGLGLLGGLQGAIGWIMVA), 176–196 (LALHLTTASLILAGLVWLAAG), 211–231 (VVACLLPALVLVQIWLGGLVA), 270–290 (LALVQFNHRLFAYLVVAVAIA), 303–323 (AAAGRAMGVAALATAQMGLGI), and 327–347 (LLHVPLWAGLAHQVFAMAVLI). Position 277 (histidine 277) interacts with heme. Histidine 338 contributes to the heme binding site.

This sequence belongs to the COX15/CtaA family. Type 2 subfamily. In terms of assembly, interacts with CtaB. Requires heme b as cofactor.

The protein resides in the cell membrane. The enzyme catalyses Fe(II)-heme o + 2 A + H2O = Fe(II)-heme a + 2 AH2. It participates in porphyrin-containing compound metabolism; heme A biosynthesis; heme A from heme O: step 1/1. In terms of biological role, catalyzes the conversion of heme O to heme A by two successive hydroxylations of the methyl group at C8. The first hydroxylation forms heme I, the second hydroxylation results in an unstable dihydroxymethyl group, which spontaneously dehydrates, resulting in the formyl group of heme A. In Methylorubrum extorquens (strain CM4 / NCIMB 13688) (Methylobacterium extorquens), this protein is Heme A synthase.